The chain runs to 594 residues: Aspartate--tRNA(Asp/Asn) ligase (594 aa).

E175 provides a ligand contact to L-aspartate. Residues 199–202 (QLFK) form an aspartate region. R221 contributes to the L-aspartate binding site. ATP contacts are provided by residues 221 to 223 (RDE) and Q230. An L-aspartate-binding site is contributed by H446. E491 serves as a coordination point for ATP. L-aspartate is bound at residue R498. An ATP-binding site is contributed by 543–546 (GLDR).

It belongs to the class-II aminoacyl-tRNA synthetase family. Type 1 subfamily. Homodimer.

It localises to the cytoplasm. It catalyses the reaction tRNA(Asx) + L-aspartate + ATP = L-aspartyl-tRNA(Asx) + AMP + diphosphate. Its function is as follows. Aspartyl-tRNA synthetase with relaxed tRNA specificity since it is able to aspartylate not only its cognate tRNA(Asp) but also tRNA(Asn). Reaction proceeds in two steps: L-aspartate is first activated by ATP to form Asp-AMP and then transferred to the acceptor end of tRNA(Asp/Asn). This chain is Aspartate--tRNA(Asp/Asn) ligase, found in Thermodesulfovibrio yellowstonii (strain ATCC 51303 / DSM 11347 / YP87).